We begin with the raw amino-acid sequence, 150 residues long: Catabolic 3-dehydroquinase 2 (150 aa).

The active-site Proton acceptor is Y23. Residues N74, H80, and D87 each contribute to the substrate site. The active-site Proton donor is the H100. Residues 101 to 102 (IT) and R111 each bind substrate.

This sequence belongs to the type-II 3-dehydroquinase family. In terms of assembly, homododecamer. Adopts a ring-like structure, composed of an arrangement of two hexameric rings stacked on top of one another.

The catalysed reaction is 3-dehydroquinate = 3-dehydroshikimate + H2O. It participates in aromatic compound metabolism; 3,4-dihydroxybenzoate biosynthesis; 3,4-dihydroxybenzoate from 3-dehydroquinate: step 1/2. Is involved in the catabolism of quinate. Allows the utilization of quinate as carbon source via the beta-ketoadipate pathway. This is Catabolic 3-dehydroquinase 2 from Aspergillus flavus (strain ATCC 200026 / FGSC A1120 / IAM 13836 / NRRL 3357 / JCM 12722 / SRRC 167).